The primary structure comprises 152 residues: Protein SprT-like (152 aa).

Positions 9-149 (LQKLTETISL…CGKCNGKLKE (141 aa)) constitute a SprT-like domain. H70 is a binding site for Zn(2+). Residue E71 is part of the active site. Position 74 (H74) interacts with Zn(2+).

This sequence belongs to the SprT family. The cofactor is Zn(2+).

It localises to the cytoplasm. The chain is Protein SprT-like from Staphylococcus saprophyticus subsp. saprophyticus (strain ATCC 15305 / DSM 20229 / NCIMB 8711 / NCTC 7292 / S-41).